Here is a 1164-residue protein sequence, read N- to C-terminus: Shugoshin 2A (1164 aa).

The stretch at 62 to 113 (LSKEKENSRRITTEKMQLQKEVEKLNFENTFLRLKLNTLNKKLVEIESHVSN) forms a coiled coil. Disordered regions lie at residues 160 to 269 (SEND…VTMR), 287 to 314 (HQPT…NTQR), 390 to 492 (RKVK…PFSR), 521 to 541 (TFVI…DKDT), and 917 to 992 (PLDS…ETHG). Low complexity predominate over residues 182–198 (SKTSPDSTSSVSRQPSS). Composition is skewed to polar residues over residues 238–247 (DQSPKSSLSE) and 288–299 (QPTSSPGSNWNN). Positions 390-412 (RKVKGASSDKKRESSKRECKDGS) are enriched in basic and acidic residues. Residues 443–472 (CISSTEQPSQVNTQKKRTLQNSSDQENIQN) are compositionally biased toward polar residues. Residues 525–541 (RKSEKDNLFPNQEDKDT) are compositionally biased toward basic and acidic residues. Residues 934 to 948 (GEQTNLPKMQKQSAG) show a composition bias toward polar residues. Ser-1042 is modified (phosphoserine). Residues 1092–1164 (ITTGTRNPHH…EPSLRSKMRR (73 aa)) are disordered. A compositionally biased stretch (low complexity) spans 1112-1125 (TSLVLVDTSSVSDT). The segment covering 1126 to 1140 (NPANPENESEGQSSH) has biased composition (polar residues).

Belongs to the shugoshin family. As to quaternary structure, part of an astrin (SPAG5)-kinastrin (SKAP) complex containing KNSTRN, SPAG5, PLK1, DYNLL1 and SGO2A. Interacts with CDCA8. Interacts with PPP2CA. In terms of tissue distribution, ubiquitously expressed in proliferating cells. Highly expressed in the testis and oocytes.

Its subcellular location is the nucleus. The protein localises to the chromosome. It is found in the centromere. The protein resides in the kinetochore. In terms of biological role, cooperates with PPP2CA to protect centromeric cohesin from separase-mediated cleavage in oocytes specifically during meiosis I. Has a crucial role in protecting REC8 at centromeres from cleavage by separase. During meiosis, protects centromeric cohesion complexes until metaphase II/anaphase II transition, preventing premature release of meiosis-specific REC8 cohesin complexes from anaphase I centromeres. Is thus essential for an accurate gametogenesis. May act by targeting PPP2CA to centromeres, thus leading to cohesin dephosphorylation. Essential for recruiting KIF2C to the inner centromere and for correcting defective kinetochore attachments. Involved in centromeric enrichment of AUKRB in prometaphase. The sequence is that of Shugoshin 2A from Mus musculus (Mouse).